The sequence spans 283 residues: Eukaryotic translation initiation factor 3 subunit K (283 aa).

In terms of domain architecture, PCI spans 52–263 (YDLLANLAIL…EIKATVIREE (212 aa)). Residues 114 to 135 (EATTTDADNAGSLSGDDDDDEV) form a disordered region.

The protein belongs to the eIF-3 subunit K family. As to quaternary structure, component of the eukaryotic translation initiation factor 3 (eIF-3) complex.

The protein localises to the cytoplasm. Component of the eukaryotic translation initiation factor 3 (eIF-3) complex, which is involved in protein synthesis of a specialized repertoire of mRNAs and, together with other initiation factors, stimulates binding of mRNA and methionyl-tRNAi to the 40S ribosome. The eIF-3 complex specifically targets and initiates translation of a subset of mRNAs involved in cell proliferation. The polypeptide is Eukaryotic translation initiation factor 3 subunit K (Mycosarcoma maydis (Corn smut fungus)).